The sequence spans 500 residues: Nucleolar and spindle-associated protein 1 (500 aa).

Disordered stretches follow at residues 48 to 204, 241 to 299, 319 to 353, and 365 to 500; these read KNET…NFKK, TKKS…ASKS, VRFS…PESE, and ELLP…VPVK. Residues 82–92 are compositionally biased toward basic residues; the sequence is THRRGRGRKPI. The span at 113–127 shows a compositional bias: polar residues; the sequence is NMASSIDRTQQQNCT. The span at 264 to 274 shows a compositional bias: low complexity; sequence SRLSLLSPLPR. The segment covering 276-298 has biased composition (polar residues); sequence TGASPSRTPMSQRRSCRSSTASK. Basic and acidic residues predominate over residues 323–332; the sequence is EATKDNEHKR. The span at 380–392 shows a compositional bias: polar residues; that stretch reads ITLNTTTQPSPAT. Over residues 442–451 the composition is skewed to basic and acidic residues; it reads PWGESKENKP. The span at 452-469 shows a compositional bias: polar residues; it reads DPNSNVSVLKNNYKQPHL.

Belongs to the NUSAP family. As to quaternary structure, interacts with DNA, microtubules, ipo7, kpna2 and kpnb1. Microtubule stabilization is inhibited by ipo7 and kpna2, while microtubule bundling is inhibited by kpnb1. Active GTP-bound ran causes dissociation of ipo7 and kpnb1.

It is found in the cytoplasm. Its subcellular location is the nucleus. The protein localises to the cytoskeleton. The protein resides in the spindle. Functionally, microtubule-associated protein with the capacity to bundle and stabilize microtubules. May associate with chromosomes and promote the organization of meiotic or mitotic spindle microtubules around them. The sequence is that of Nucleolar and spindle-associated protein 1 (nusap1) from Xenopus tropicalis (Western clawed frog).